A 124-amino-acid polypeptide reads, in one-letter code: KESAAAKFERQHMDSSTSSASSSNYCNQMMKSRNLTQDRCKPVNTFVHESLADVQAVCSQKNVACKNGQTNCYQSYSTMSITDCRETGSSKYPNCAYKTTQAEKHIIVACEGNPYVPVHFDASV.

Over residues 1–13 (KESAAAKFERQHM) the composition is skewed to basic and acidic residues. The segment at 1–24 (KESAAAKFERQHMDSSTSSASSSN) is disordered. 2 residues coordinate substrate: Lys-7 and Arg-10. Residue His-12 is the Proton acceptor of the active site. Disulfide bonds link Cys-26-Cys-84, Cys-40-Cys-95, Cys-58-Cys-110, and Cys-65-Cys-72. N-linked (GlcNAc...) asparagine; partial glycosylation is present at Asn-34. Residues 41–45 (KPVNT), Lys-66, and Arg-85 each bind substrate. The Proton donor role is filled by His-119.

This sequence belongs to the pancreatic ribonuclease family. Monomer. Interacts with and forms tight 1:1 complexes with RNH1. Dimerization of two such complexes may occur. Interaction with RNH1 inhibits this protein. In terms of tissue distribution, pancreas.

The protein localises to the secreted. The catalysed reaction is an [RNA] containing cytidine + H2O = an [RNA]-3'-cytidine-3'-phosphate + a 5'-hydroxy-ribonucleotide-3'-[RNA].. It catalyses the reaction an [RNA] containing uridine + H2O = an [RNA]-3'-uridine-3'-phosphate + a 5'-hydroxy-ribonucleotide-3'-[RNA].. Endonuclease that catalyzes the cleavage of RNA on the 3' side of pyrimidine nucleotides. Acts on single-stranded and double-stranded RNA. This chain is Ribonuclease pancreatic (RNASE1), found in Ovis aries (Sheep).